Consider the following 162-residue polypeptide: Heat shock protein beta-6 (162 aa).

Positions 1-72 (MEIRVPVQPS…PTAQVPTDPG (72 aa)) are involved in stabilization of the HSPB1:HSBP6 heterodimer. Position 16 is a phosphoserine (Ser16). Gln31 is covalently cross-linked (Isoglutamyl lysine isopeptide (Gln-Lys) (interchain with K-162)). The 107-residue stretch at 56-162 (RAPSVALPTA…ASLPSPPAAK (107 aa)) folds into the sHSP domain. Gln66 is subject to Deamidated glutamine. Residue Ser157 is modified to Phosphoserine. An Isoglutamyl lysine isopeptide (Lys-Gln) (interchain with Q-31) cross-link involves residue Lys162.

Belongs to the small heat shock protein (HSP20) family. As to quaternary structure, homodimer. Small heat shock proteins form high molecular mass oligomers containing variable number of monomers; these oligomers display a very flexible quaternary structure easily exchanging their subunits. Heterooligomer with HSPB1; formed through oligomerization of HSPB1:HSBP6 dimers; subunit exchange leads to formation of at least two different heterooligomeric complexes, differing in variable quantities of HSPB1 and HSPB6 homodimers in addition to HSPB1:HSPB6 heterodimers. Heterooligomer with CRYAB; large heterooligomers consist of CRYAB homodimers and HSPB5:HSPB6 heterodimers but lacking HSPB6 homodimers. Interacts with BAG3. Interacts (phosphorylated) with YWHAZ. Interacts with PDE4A and PDE4D; required for maintenance of the non-phosphorylated state of HSPB6 under basal conditions. Interacts with KDR. Interacts with PRKD1. Post-translationally, the N-terminus is blocked. Phosphorylated at Ser-16 by PKA and probably PKD1K; required to protect cardiomyocytes from apoptosis. Widely expressed. High expression in muscle tissues.

It is found in the cytoplasm. Its subcellular location is the nucleus. It localises to the secreted. Its function is as follows. Small heat shock protein which functions as a molecular chaperone probably maintaining denatured proteins in a folding-competent state. Seems to have versatile functions in various biological processes. Plays a role in regulating muscle function such as smooth muscle vasorelaxation and cardiac myocyte contractility. May regulate myocardial angiogenesis implicating KDR. Overexpression mediates cardioprotection and angiogenesis after induced damage. Stabilizes monomeric YWHAZ thereby supporting YWHAZ chaperone-like activity. This chain is Heat shock protein beta-6 (Hspb6), found in Rattus norvegicus (Rat).